Reading from the N-terminus, the 451-residue chain is Glucose-6-phosphate isomerase (451 aa).

Catalysis depends on Glu291, which acts as the Proton donor. Active-site residues include His312 and Lys426.

This sequence belongs to the GPI family.

It localises to the cytoplasm. It catalyses the reaction alpha-D-glucose 6-phosphate = beta-D-fructose 6-phosphate. The protein operates within carbohydrate biosynthesis; gluconeogenesis. It participates in carbohydrate degradation; glycolysis; D-glyceraldehyde 3-phosphate and glycerone phosphate from D-glucose: step 2/4. Functionally, catalyzes the reversible isomerization of glucose-6-phosphate to fructose-6-phosphate. The sequence is that of Glucose-6-phosphate isomerase from Caldanaerobacter subterraneus subsp. tengcongensis (strain DSM 15242 / JCM 11007 / NBRC 100824 / MB4) (Thermoanaerobacter tengcongensis).